The sequence spans 358 residues: Tetraacyldisaccharide 4'-kinase (358 aa).

Position 71-78 (71-78 (IAGGAGKT)) interacts with ATP.

The protein belongs to the LpxK family.

It catalyses the reaction a lipid A disaccharide + ATP = a lipid IVA + ADP + H(+). It functions in the pathway glycolipid biosynthesis; lipid IV(A) biosynthesis; lipid IV(A) from (3R)-3-hydroxytetradecanoyl-[acyl-carrier-protein] and UDP-N-acetyl-alpha-D-glucosamine: step 6/6. In terms of biological role, transfers the gamma-phosphate of ATP to the 4'-position of a tetraacyldisaccharide 1-phosphate intermediate (termed DS-1-P) to form tetraacyldisaccharide 1,4'-bis-phosphate (lipid IVA). The chain is Tetraacyldisaccharide 4'-kinase from Methylibium petroleiphilum (strain ATCC BAA-1232 / LMG 22953 / PM1).